The chain runs to 745 residues: Junction plakoglobin (745 aa).

Position 1 is an N-acetylmethionine (M1). T14 carries an O-linked (GlcNAc) threonine glycan. A phosphoserine mark is found at S99 and S125. ARM repeat units follow at residues N132–K171, K172–H215, R216–L255, E258–Y297, G298–C341, P342–D381, A383–C420, S423–S464, E470–L510, P512–T551, P574–Q613, and K615–R661. The interval N132 to Y297 is interaction with DSC1 and DSG1. Residue S182 is modified to Phosphoserine. The interaction with DSC1 stretch occupies residues P574–R661. 2 positions are modified to phosphoserine: S665 and S730.

This sequence belongs to the beta-catenin family. In terms of assembly, homodimer. Component of an E-cadherin/catenin adhesion complex composed of at least E-cadherin/CDH1 and gamma-catenin/JUP, and possibly alpha-catenin/CTNNA1; the complex is located to adherens junctions. The stable association of CTNNA1 is controversial as CTNNA1 was shown not to bind to F-actin when assembled in the complex. Interacts with MUC1. Interacts with CAV1. Interacts with PTPRJ. Interacts with DSG1. Interacts with DSC1 and DSC2. Interacts with PKP2. Interacts with PKP3 (via N-terminus); the interaction is required for PKP3 localization to desmosome cell-cell junctions. Interacts with DSG4. In terms of processing, may be phosphorylated by FER. As to expression, expressed in the mammary epithelium (at protein level).

Its subcellular location is the cell junction. The protein resides in the adherens junction. It localises to the desmosome. It is found in the cytoplasm. The protein localises to the cytoskeleton. Its subcellular location is the cell membrane. The protein resides in the nucleus. Common junctional plaque protein. The membrane-associated plaques are architectural elements in an important strategic position to influence the arrangement and function of both the cytoskeleton and the cells within the tissue. The presence of plakoglobin in both the desmosomes and in the intermediate junctions suggests that it plays a central role in the structure and function of submembranous plaques. Acts as a substrate for VE-PTP and is required by it to stimulate VE-cadherin function in endothelial cells. Can replace beta-catenin in E-cadherin/catenin adhesion complexes which are proposed to couple cadherins to the actin cytoskeleton. This Mus musculus (Mouse) protein is Junction plakoglobin.